We begin with the raw amino-acid sequence, 99 residues long: Aspartyl/glutamyl-tRNA(Asn/Gln) amidotransferase subunit C (99 aa).

Belongs to the GatC family. Heterotrimer of A, B and C subunits.

The catalysed reaction is L-glutamyl-tRNA(Gln) + L-glutamine + ATP + H2O = L-glutaminyl-tRNA(Gln) + L-glutamate + ADP + phosphate + H(+). The enzyme catalyses L-aspartyl-tRNA(Asn) + L-glutamine + ATP + H2O = L-asparaginyl-tRNA(Asn) + L-glutamate + ADP + phosphate + 2 H(+). In terms of biological role, allows the formation of correctly charged Asn-tRNA(Asn) or Gln-tRNA(Gln) through the transamidation of misacylated Asp-tRNA(Asn) or Glu-tRNA(Gln) in organisms which lack either or both of asparaginyl-tRNA or glutaminyl-tRNA synthetases. The reaction takes place in the presence of glutamine and ATP through an activated phospho-Asp-tRNA(Asn) or phospho-Glu-tRNA(Gln). The polypeptide is Aspartyl/glutamyl-tRNA(Asn/Gln) amidotransferase subunit C (Cupriavidus necator (strain ATCC 17699 / DSM 428 / KCTC 22496 / NCIMB 10442 / H16 / Stanier 337) (Ralstonia eutropha)).